The sequence spans 3623 residues: Cubilin (3623 aa).

Residues 1-23 (MMNMSLPFLWSLLTLLIFAEVNG) form the signal peptide. The propeptide at 24–35 (EAGELELQRQKR) is removed in mature form. Positions 42–49 (PRMATERG) are interaction with AMN. N-linked (GlcNAc...) asparagine glycosylation is present at N105. One can recognise an EGF-like 1 domain in the interval 132-168 (DKKVCSSNPCQNGGTCLNLHDSFFCICPPQWKGPLCS). 9 disulfides stabilise this stretch: C136–C147, C141–C156, C158–C167, C174–C190, C184–C199, C201–C210, C267–C280, C274–C289, and C292–C303. The EGF-like 2; calcium-binding domain maps to 170–211 (DVNECEIYSGTPLSCQNGGTCVNTMGSYSCHCPPETYGPQCA). The region spanning 263–304 (DRDECSFQPGPCSTLVQCFNTQGSFYCGACPTGWQGNGYICE) is the EGF-like 3; calcium-binding domain. The EGF-like 4; calcium-binding domain occupies 305 to 348 (DINECEINNGGCSVAPPVECVNTPGSSHCQACPPGYQGDGRVCT). EGF-like domains lie at 349 to 385 (LTDICSVSNGGCHPDASCSSTLGSLPLCTCLPGYTGN) and 395 to 430 (LSNICLSHPCLNGQCIDTVSGYFCKCDSGWTGVNCT). Cystine bridges form between C353–C366, C360–C376, C399–C409, C404–C418, C420–C429, C436–C447, C441–C456, C458–C467, C474–C500, C527–C549, C590–C616, C643–C665, and C708–C734. N428 is a glycosylation site (N-linked (GlcNAc...) asparagine). An EGF-like 7; calcium-binding domain is found at 432–468 (NINECLSNPCLNGGTCVDGVDSFSCECTRLWTGALCQ). CUB domains follow at residues 474–586 (CGES…WETQ), 590–702 (CGGI…YLTS), 708–816 (CGGN…YQVA), 816–928 (ACGD…FSAE), 932–1042 (CGEI…YEAI), 1048–1161 (CLQD…WDGS), 1165–1277 (CGGN…YRQT), 1278–1389 (CENV…WFVY), 1391–1506 (CGGE…WQAV), 1510–1619 (CGGI…FRQA), 1620–1734 (CGGH…VTAS), 1738–1850 (CGGT…FMKI), 1852–1963 (GNDN…WFAV), 1978–2091 (CGGF…FHKS), 2092–2213 (CGGY…YEAK), 2217–2334 (CGGN…YSIA), 2336–2448 (CGGR…FESS), 2452–2565 (CGGD…YTSS), 2570–2687 (CGGS…YSFT), 2689–2801 (CGGI…WNTQ), 2805–2919 (CGGI…FVSR), 2920–3035 (CGSN…YRII), 3037–3150 (CGGV…FRQT), 3157–3274 (CGGY…YTIM), 3278–3393 (CGGT…YQIA), 3395–3507 (CNRD…WTSS), and 3511–3623 (CGGT…TWDS). N482 is a glycosylation site (N-linked (GlcNAc...) asparagine). Residues N711, N749, N781, and N857 are each glycosylated (N-linked (GlcNAc...) asparagine). 2 cysteine pairs are disulfide-bonded: C869/C891 and C932/C958. An N-linked (GlcNAc...) asparagine glycan is attached at N957. Residue E980 participates in Ca(2+) binding. N984 carries an N-linked (GlcNAc...) asparagine glycan. C985 and C1005 form a disulfide bridge. Ca(2+) contacts are provided by D988, D1027, D1029, and L1030. A disulfide bridge links C1048 with C1074. N1092 is a glycosylation site (N-linked (GlcNAc...) asparagine). Residues E1096, D1105, D1146, I1148, and D1149 each coordinate Ca(2+). A disulfide bond links C1165 and C1191. A glycan (N-linked (GlcNAc...) asparagine) is linked at N1168. E1213 serves as a coordination point for Ca(2+). An N-linked (GlcNAc...) asparagine glycan is attached at N1217. C1218 and C1240 are disulfide-bonded. Ca(2+) contacts are provided by D1221, D1262, G1264, and Q1265. Residues C1278 and C1306 are joined by a disulfide bond. 3 N-linked (GlcNAc...) asparagine glycosylation sites follow: N1285, N1307, and N1319. Ca(2+) is bound at residue E1328. Residue N1332 is glycosylated (N-linked (GlcNAc...) asparagine). The cysteines at positions 1333 and 1351 are disulfide-linked. The Ca(2+) site is built by D1336, D1373, and V1375. Cystine bridges form between C1391–C1417 and C1444–C1466. N-linked (GlcNAc...) asparagine glycosylation occurs at N1500. A disulfide bond links C1510 and C1536. Residue N1551 is glycosylated (N-linked (GlcNAc...) asparagine). Cystine bridges form between C1563/C1581, C1620/C1647, C1675/C1697, C1738/C1764, and C1791/C1812. N-linked (GlcNAc...) asparagine glycosylation occurs at N1646. Residues N1802, N1819, and N1885 are each glycosylated (N-linked (GlcNAc...) asparagine). Disulfide bonds link C1905/C1927, C1978/C2006, and C2032/C2054. 2 N-linked (GlcNAc...) asparagine glycosylation sites follow: N2085 and N2117. 2 cysteine pairs are disulfide-bonded: C2092–C2118 and C2217–C2247. N-linked (GlcNAc...) asparagine glycosylation is present at N2274. 2 disulfides stabilise this stretch: C2275-C2297 and C2336-C2363. Residues N2386 and N2400 are each glycosylated (N-linked (GlcNAc...) asparagine). Disulfide bonds link C2390–C2411, C2452–C2478, and C2505–C2527. N-linked (GlcNAc...) asparagine glycans are attached at residues N2531, N2581, N2592, and N2610. A disulfide bridge connects residues C2570 and C2599. Cystine bridges form between C2628/C2649, C2689/C2715, C2742/C2764, C2805/C2831, C2860/C2883, C2920/C2946, and C2977/C2999. N2813 carries an N-linked (GlcNAc...) asparagine glycan. 2 N-linked (GlcNAc...) asparagine glycosylation sites follow: N2923 and N2945. T3008 is subject to Phosphothreonine. Cystine bridges form between C3037–C3064 and C3091–C3113. Residues N3042, N3103, N3125, and N3165 are each glycosylated (N-linked (GlcNAc...) asparagine). Intrachain disulfides connect C3157-C3185 and C3215-C3237. Residues N3268, N3283, N3290, and N3295 are each glycosylated (N-linked (GlcNAc...) asparagine). 2 disulfides stabilise this stretch: C3278-C3306 and C3332-C3354. N-linked (GlcNAc...) asparagine glycosylation occurs at N3357. A disulfide bridge links C3395 with C3421. 4 N-linked (GlcNAc...) asparagine glycosylation sites follow: N3430, N3457, N3533, and N3576. Disulfide bonds link C3448-C3470, C3511-C3537, and C3564-C3586.

As to quaternary structure, interacts with AMN. Component of the cubam complex composed of one CUBN trimer and one AMN chain. The cubam complex can dimerize. Interacts with LRP2 in a dual-receptor complex in a calcium-dependent manner. Found in a complex with PID1/PCLI1, LRP1 and CUBNI. Interacts with LRP1 and PID1/PCLI1. Post-translationally, the precursor is cleaved by a trans-Golgi proteinase furin, removing a propeptide. In terms of processing, N-glycosylated. Detected in kidney cortex (at protein level). Expressed in kidney proximal tubule cells, placenta, visceral yolk-sac cells and in absorptive intestinal cells. Expressed in the epithelium of intestine and kidney.

It is found in the apical cell membrane. The protein resides in the cell membrane. It localises to the membrane. Its subcellular location is the coated pit. The protein localises to the endosome. It is found in the lysosome membrane. Functionally, endocytic receptor which plays a role in lipoprotein, vitamin and iron metabolism by facilitating their uptake. Acts together with LRP2 to mediate endocytosis of high-density lipoproteins, GC, hemoglobin, ALB, TF and SCGB1A1. Acts together with AMN to mediate endocytosis of the CBLIF-cobalamin complex. Binds to ALB, MB, Kappa and lambda-light chains, TF, hemoglobin, GC, SCGB1A1, APOA1, high density lipoprotein, and the CBLIF-cobalamin complex. Ligand binding requires calcium. Serves as important transporter in several absorptive epithelia, including intestine, renal proximal tubules and embryonic yolk sac. May play an important role in the development of the peri-implantation embryo through internalization of APOA1 and cholesterol. Binds to LGALS3 at the maternal-fetal interface. The polypeptide is Cubilin (CUBN) (Homo sapiens (Human)).